The sequence spans 221 residues: Putative hemin import ATP-binding protein HrtA (221 aa).

The region spanning 3 to 221 (LVVKDIVKNF…IELEDGKITD (219 aa)) is the ABC transporter domain. Residue 39-46 (GASGSGKT) participates in ATP binding.

It belongs to the ABC transporter superfamily. HrtA family. As to quaternary structure, the complex is composed of two ATP-binding proteins (HrtA), two transmembrane proteins (HrtB) and a solute-binding protein.

The protein resides in the cell membrane. Part of the ABC transporter complex hrt involved in hemin import. Responsible for energy coupling to the transport system. The polypeptide is Putative hemin import ATP-binding protein HrtA (hrtA) (Staphylococcus aureus (strain Mu50 / ATCC 700699)).